The primary structure comprises 33 residues: Cytochrome b6-f complex subunit 6 (33 aa).

Residues 4–24 (ITIISYFGFLLASIIFTLVLF) form a helical membrane-spanning segment.

The protein belongs to the PetL family. In terms of assembly, the 4 large subunits of the cytochrome b6-f complex are cytochrome b6, subunit IV (17 kDa polypeptide, PetD), cytochrome f and the Rieske protein, while the 4 small subunits are PetG, PetL, PetM and PetN. The complex functions as a dimer.

The protein resides in the plastid. It is found in the chloroplast thylakoid membrane. Component of the cytochrome b6-f complex, which mediates electron transfer between photosystem II (PSII) and photosystem I (PSI), cyclic electron flow around PSI, and state transitions. PetL is important for photoautotrophic growth as well as for electron transfer efficiency and stability of the cytochrome b6-f complex. This is Cytochrome b6-f complex subunit 6 from Pinus thunbergii (Japanese black pine).